The following is a 473-amino-acid chain: Spliceosome-associated protein CWC27 homolog (473 aa).

N-acetylserine is present on S2. Residues T11–V166 enclose the PPIase cyclophilin-type domain. Over residues R177–K193 the composition is skewed to basic and acidic residues. 2 disordered regions span residues R177–T386 and Q399–R473. Positions S206–K230 form a coiled coil. Positions S231–H241 are enriched in basic and acidic residues. Residues G257 to D275 show a composition bias toward acidic residues. 3 stretches are compositionally biased toward basic and acidic residues: residues G276–A287, E305–E348, and E360–R372. Residues E307–K378 adopt a coiled-coil conformation. S347 bears the Phosphoserine mark. A compositionally biased stretch (acidic residues) spans P405–G419. Composition is skewed to basic and acidic residues over residues Q426–S438 and R458–R473.

It belongs to the cyclophilin-type PPIase family. Part of the activated spliceosome B/catalytic step 1 spliceosome, one of the forms of the spliceosome which has a well-formed active site but still cannot catalyze the branching reaction and is composed at least of 52 proteins, the U2, U5 and U6 snRNAs and the pre-mRNA. Recruited during early steps of activated spliceosome B maturation, it is probably one of the first proteins released from this complex as he matures to the spliceosome C complex. Component of the minor spliceosome, which splices U12-type introns.

Its subcellular location is the nucleus. Functionally, as part of the spliceosome, plays a role in pre-mRNA splicing. Probable inactive PPIase with no peptidyl-prolyl cis-trans isomerase activity. As a component of the minor spliceosome, involved in the splicing of U12-type introns in pre-mRNAs. The polypeptide is Spliceosome-associated protein CWC27 homolog (Macaca fascicularis (Crab-eating macaque)).